We begin with the raw amino-acid sequence, 388 residues long: MTEGDSARQVRQQLREQGLTPLEVNETTEKAKREANRFVLFRRGASTSELALITRQLATLVGAGLTIEEALRAVAEQCEKAHLRSLVATVRSKVVEGYSLADSLGAFPHVFDQLFRSMVAAGEKSGHLEKVLNRLADYTEQRQHMRTKLLQAMIYPIVLTLVAVGVISILLTAVVPKVVAQFEHMGQQLPATTRFLIGTSELMQHYGLWFLLLLFIGGFVWRWWLTDEKRRRHWHQVVLRLPVIGRVSRGLNTARFARTLSILNASAVPLLEGMKIAGEVLSNDFARTRIGEATERVREGTSLRKALDETKIFPPMMLHMIASGEQSGELDSMLERAADNQDREFETQVNIALGVFEPLLVVSMAGVVLFIVMSILQPILELNNMVNL.

The segment at 1–28 (MTEGDSARQVRQQLREQGLTPLEVNETT) is disordered. Residues 1 to 153 (MTEGDSARQV…HMRTKLLQAM (153 aa)) lie on the Cytoplasmic side of the membrane. Ca(2+)-binding residues include Glu-79, Asn-133, and Asp-137. A helical membrane pass occupies residues 154 to 174 (IYPIVLTLVAVGVISILLTAV). Residues 175–205 (VPKVVAQFEHMGQQLPATTRFLIGTSELMQH) lie on the Periplasmic side of the membrane. Residues 206–226 (YGLWFLLLLFIGGFVWRWWLT) traverse the membrane as a helical segment. Over 227-350 (DEKRRRHWHQ…QDREFETQVN (124 aa)) the chain is Cytoplasmic. The chain crosses the membrane as a helical span at residues 351–371 (IALGVFEPLLVVSMAGVVLFI). Over 372-388 (VMSILQPILELNNMVNL) the chain is Periplasmic.

It belongs to the GSP F family. Type II secretion system is composed of four main components: the outer membrane complex, the inner membrane complex, the cytoplasmic secretion ATPase and the periplasm-spanning pseudopilus. Homodimer. Interacts with ExeE and ExeL components.

The protein localises to the cell inner membrane. In terms of biological role, component of the type II secretion system inner membrane complex required for the energy-dependent secretion of extracellular factors such as proteases and toxins from the periplasm. The polypeptide is Type II secretion system protein F (exeF) (Aeromonas hydrophila).